The chain runs to 310 residues: tRNA uridine(34) hydroxylase (310 aa).

Residues 123-217 enclose the Rhodanese domain; the sequence is ADPDVVVIDV…YLEKVPEDES (95 aa). The active-site Cysteine persulfide intermediate is the Cys-177.

This sequence belongs to the TrhO family.

The enzyme catalyses uridine(34) in tRNA + AH2 + O2 = 5-hydroxyuridine(34) in tRNA + A + H2O. Its function is as follows. Catalyzes oxygen-dependent 5-hydroxyuridine (ho5U) modification at position 34 in tRNAs. This chain is tRNA uridine(34) hydroxylase, found in Acaryochloris marina (strain MBIC 11017).